Consider the following 114-residue polypeptide: rRNA-processing protein cgrA (114 aa).

The segment covering 1–13 has biased composition (low complexity); sequence MSSAAPAPSTHAA. 2 disordered regions span residues 1 to 47 and 77 to 114; these read MSSA…AARK and RRAAKEEKERYEKMAEKMHRKRVERLKKREKRNKLLNS. The stretch at 40–101 forms a coiled coil; that stretch reads TKRAAARKEQ…EKMHRKRVER (62 aa). The segment covering 77–93 has biased composition (basic and acidic residues); that stretch reads RRAAKEEKERYEKMAEK. Basic residues predominate over residues 94–114; that stretch reads MHRKRVERLKKREKRNKLLNS.

Belongs to the CGR1 family.

It localises to the nucleus. The protein resides in the nucleolus. Involved in nucleolar integrity and required for processing of the pre-rRNA for the 60S ribosome subunit. This Emericella nidulans (strain FGSC A4 / ATCC 38163 / CBS 112.46 / NRRL 194 / M139) (Aspergillus nidulans) protein is rRNA-processing protein cgrA (cgrA).